A 239-amino-acid chain; its full sequence is Zinc finger protein 575 (239 aa).

The disordered stretch occupies residues 1–62 (MLGGSVKSEV…PQRPHRCPDC (62 aa)). Positions 22 to 31 (PETKAPHQDL) are enriched in basic and acidic residues. Residues 46–57 (RPRRRPPPQRPH) show a composition bias toward basic residues. 6 C2H2-type zinc fingers span residues 57-79 (HRCP…RLAH), 85-107 (HPCP…RLTH), 113-135 (HSCP…LWTH), 141-163 (YPCP…RHTH), 171-193 (YPCP…RLCH), and 207-230 (HRCS…RSHH).

It belongs to the krueppel C2H2-type zinc-finger protein family.

It is found in the nucleus. May be involved in transcriptional regulation. This is Zinc finger protein 575 (Znf575) from Mus musculus (Mouse).